A 396-amino-acid chain; its full sequence is Beta-peptidyl aminopeptidase BapA (396 aa).

The N-terminal stretch at Met-1 to Ala-21 is a signal peptide. Ser-271 functions as the Nucleophile in the catalytic mechanism. Residues Ser-309 and Asp-311 each act as proton donor/acceptor in the active site.

This sequence belongs to the peptidase S58 family. In terms of assembly, heterooctamer of 4 heterodimers ((alpha:beta)4); each heterodimer is composed of an alpha subunit and a beta subunit processed from the same precursor. Post-translationally, autoproteolytic processing to generate the alpha and beta subunit is required for self-activation and is proposed to use a similar mechanism as substrate cleavage.

The protein localises to the periplasm. It carries out the reaction Cleaves N-terminal beta-homoamino acids from peptides composed of 2 to 6 amino acids.. Its activity is regulated as follows. Inhibited by AEBSF (4-(2-aminoethyl)benzenesulfonyl fluoride, Pefabloc SC). Functionally, beta-aminopeptidase that can cleave synthetic beta-peptides which consist of backbone-elongated beta-amino acid residues that are not processed by common proteolytic enzymes. Can cleave the beta-peptides beta-homoVal-beta-homoAla-beta-homoLeu and beta-homoAla-beta-homoLeu. Requires a beta-amino acid at the N-terminus of peptide substrates and cleaves the peptide bond between the N-terminal beta-amino acid and the amino acid at the second position of tripeptidic substrates of the general structure H-betahXaa-Ile-betahTyr-OH according to the following preferences with regard to the side chain of the N-terminal beta-amino acid: aliphatic and aromatic &gt; OH-containing &gt; hydrogen, basic and polar. beta-homoVal-beta-homoAla-beta-homoLeu and beta-homoAla-beta-homoLeu. The polypeptide is Beta-peptidyl aminopeptidase BapA (Sphingosinicella microcystinivorans).